The chain runs to 297 residues: 3-mercaptopyruvate sulfurtransferase (297 aa).

Ala-2 bears the N-acetylalanine mark. Residues Ser-3, Trp-15, Pro-23, and Ser-35 each carry the phosphoserine modification. The region spanning 25-144 (AGQPLQLLDA…WLRQNLPLSS (120 aa)) is the Rhodanese 1 domain. N6-acetyllysine; alternate is present on Lys-40. Lys-40 is subject to N6-succinyllysine; alternate. Residues 145 to 160 (GKSQPAPAEFRAQLDP) are hinge. N6-succinyllysine occurs at positions 146 and 164. The 115-residue stretch at 174–288 (ESRRFQVVDS…WYMRARPEDV (115 aa)) folds into the Rhodanese 2 domain. Arg-188 serves as a coordination point for substrate. Cys-248 (cysteine persulfide intermediate) is an active-site residue.

As to quaternary structure, monomer (active form). Homodimer; disulfide-linked (inactive form).

It localises to the cytoplasm. The protein localises to the mitochondrion. Its subcellular location is the synapse. The protein resides in the synaptosome. The enzyme catalyses 2-oxo-3-sulfanylpropanoate + [thioredoxin]-dithiol = [thioredoxin]-disulfide + hydrogen sulfide + pyruvate + H(+). Its activity is regulated as follows. By oxidative stress, and thioredoxin. Under oxidative stress conditions, the catalytic cysteine site is converted to a sulfenate which inhibits the MPST enzyme activity. Reduced thioredoxin cleaves an intersubunit disulfide bond to turn on the redox switch and reactivate the enzyme. In terms of biological role, transfer of a sulfur ion to cyanide or to other thiol compounds. Also has weak rhodanese activity. Detoxifies cyanide and is required for thiosulfate biosynthesis. Acts as an antioxidant. In combination with cysteine aminotransferase (CAT), contributes to the catabolism of cysteine and is an important producer of hydrogen sulfide in the brain, retina and vascular endothelial cells. Hydrogen sulfide H(2)S is an important synaptic modulator, signaling molecule, smooth muscle contractor and neuroprotectant. Its production by the 3MST/CAT pathway is regulated by calcium ions. The sequence is that of 3-mercaptopyruvate sulfurtransferase (MPST) from Homo sapiens (Human).